The following is a 262-amino-acid chain: 3-methyl-2-oxobutanoate hydroxymethyltransferase (262 aa).

Asp42 and Asp81 together coordinate Mg(2+). 3-methyl-2-oxobutanoate-binding positions include 42–43, Asp81, and Lys110; that span reads DS. Mg(2+) is bound at residue Glu112. Residue Glu179 is the Proton acceptor of the active site.

It belongs to the PanB family. Homodecamer; pentamer of dimers. Mg(2+) is required as a cofactor.

The protein localises to the cytoplasm. The catalysed reaction is 3-methyl-2-oxobutanoate + (6R)-5,10-methylene-5,6,7,8-tetrahydrofolate + H2O = 2-dehydropantoate + (6S)-5,6,7,8-tetrahydrofolate. The protein operates within cofactor biosynthesis; (R)-pantothenate biosynthesis; (R)-pantoate from 3-methyl-2-oxobutanoate: step 1/2. Functionally, catalyzes the reversible reaction in which hydroxymethyl group from 5,10-methylenetetrahydrofolate is transferred onto alpha-ketoisovalerate to form ketopantoate. In Methylobacillus flagellatus (strain ATCC 51484 / DSM 6875 / VKM B-1610 / KT), this protein is 3-methyl-2-oxobutanoate hydroxymethyltransferase.